Here is a 185-residue protein sequence, read N- to C-terminus: MISVTELRNGTKVEMDGGLWECLDYSHLKMGRGGAKVVTKFRNMETGSIVDRTFNSGEKLQDIYVEGKKMQYLYKDGADFMFMDMDTFEQVILPPSLVGDAAKFMKENTEVEVAMYGEKALTITLPNQVILKIVETDPGVRGDTVSGGTKPAKLETGAVVQVPLFVEQDTNVKVDTRTGQYLSRA.

The protein belongs to the elongation factor P family.

The protein resides in the cytoplasm. The protein operates within protein biosynthesis; polypeptide chain elongation. Functionally, involved in peptide bond synthesis. Stimulates efficient translation and peptide-bond synthesis on native or reconstituted 70S ribosomes in vitro. Probably functions indirectly by altering the affinity of the ribosome for aminoacyl-tRNA, thus increasing their reactivity as acceptors for peptidyl transferase. This chain is Elongation factor P, found in Deinococcus deserti (strain DSM 17065 / CIP 109153 / LMG 22923 / VCD115).